Reading from the N-terminus, the 518-residue chain is MSLLIKNGTIVNDDAMFKSDVLVHDGKIVEIAPSIDPTPGLEVVDATDRFVIPGGIDPHTHMQLPFMGEVAKDDFHRGTEAAVAGGTTMIIDFVIPTKGESLLVAYDRWRGWADPKVVCDYGLSMAITSWGQEIAKEMEMVTKADYGINSFKFFLAYAGVFMVRDEEFYQGMLQCAKLRALARVHAENGAVIAERCEHLLSSGITGPEGHTQSRPEELEAEATFRACTMASQANCPLYVVHVMSKGAAAAIAHHRKKGAVVFGEPIAAGLATDGSHYYNEDWLHAARYIMSPPLSRDPSTPNALMKLLAAGELHLTATDNCTFDCHQKSLGKDDFTKIPNGVNGVEDRMSVVWDKGVHAGIIDPMKFVAVTSTMAAKIFNCYPRKGRIAVGSDADIVVWNANATRTISKDTHHHAIDFNIFEGMQVHGVPETTICRGRIVWADGQLRTVQGAGRFVPLPPDSQIVFSAVDNRGKALEPVKVERAPYVATTLEAPDANANIVVKTRSAVPPGGISSIQF.

Positions 59, 61, and 152 each coordinate Zn(2+). K152 bears the N6-carboxylysine mark. Y157 lines the substrate pocket. Residues H185 and H241 each coordinate Zn(2+). S291 is a substrate binding site. D319 contacts Zn(2+). N340 serves as a coordination point for substrate.

Belongs to the metallo-dependent hydrolases superfamily. Hydantoinase/dihydropyrimidinase family. As to quaternary structure, homotetramer. It depends on Zn(2+) as a cofactor. Carboxylation allows a single lysine to coordinate two zinc ions.

The enzyme catalyses 5,6-dihydrouracil + H2O = 3-(carbamoylamino)propanoate + H(+). The sequence is that of Dihydropyrimidinase 2 (dhp-2) from Caenorhabditis briggsae.